The chain runs to 82 residues: Splicing factor U2AF 35 kDa subunit (82 aa).

Ala2 carries the post-translational modification N-acetylalanine. Residues 12 to 40 form a C3H1-type zinc finger; sequence EKDKVNCSFYFKIGACRHGDRCSRLHNKP. Lys39 carries the post-translational modification N6-methyllysine. The 18-residue stretch at 65 to 82 folds into the RRM domain; sequence SHCHVSDVEVQEHYDNFF.

This sequence belongs to the splicing factor SR family. As to quaternary structure, identified in the spliceosome C complex. Heterodimer with U2AF2. Interacts (via RS domain) with PHF5A (via N-terminus). Interacts with ZRANB2. Interacts with SDE2. Interacts with SF3B1.

It is found in the nucleus. The protein resides in the nucleus speckle. Plays a critical role in both constitutive and enhancer-dependent splicing by mediating protein-protein interactions and protein-RNA interactions required for accurate 3'-splice site selection. Recruits U2 snRNP to the branch point. Directly mediates interactions between U2AF2 and proteins bound to the enhancers and thus may function as a bridge between U2AF2 and the enhancer complex to recruit it to the adjacent intron. This Sus scrofa (Pig) protein is Splicing factor U2AF 35 kDa subunit (U2AF1).